The primary structure comprises 72 residues: Heat shock factor-binding protein 1-like protein 1 (72 aa).

Positions 12-66 (DLLQNAAENLLQEVEEHFQALTATLNLRMEEMGNRIEDLQRNVDDLMAQAGIENS) form a coiled coil.

Belongs to the HSBP1 family.

In Rattus norvegicus (Rat), this protein is Heat shock factor-binding protein 1-like protein 1 (Hsbp1l1).